A 700-amino-acid chain; its full sequence is Constitutive coactivator of peroxisome proliferator-activated receptor gamma (700 aa).

Belongs to the constitutive coactivator of PPAR-gamma family. As to quaternary structure, interacts with ESR1 and RXRA. Interacts with PPARG; in a ligand-independent manner.

Its subcellular location is the nucleus. In terms of biological role, functions as a transactivator of PPARG and ESR1. Functions in adipogenesis through PPARG activation. The sequence is that of Constitutive coactivator of peroxisome proliferator-activated receptor gamma (FAM120B) from Bos taurus (Bovine).